A 469-amino-acid chain; its full sequence is Trigger factor (469 aa).

A PPIase FKBP-type domain is found at 166–245; it reads GDFLTIDITA…VKSVKERELP (80 aa). Residues 430 to 469 are disordered; that stretch reads GGEEEAAEAEAAPAVDSDAVEGEAATEEAAPSDDPAAVKF.

The protein belongs to the FKBP-type PPIase family. Tig subfamily.

Its subcellular location is the cytoplasm. The catalysed reaction is [protein]-peptidylproline (omega=180) = [protein]-peptidylproline (omega=0). In terms of biological role, involved in protein export. Acts as a chaperone by maintaining the newly synthesized protein in an open conformation. Functions as a peptidyl-prolyl cis-trans isomerase. The sequence is that of Trigger factor from Arthrobacter sp. (strain FB24).